Here is a 552-residue protein sequence, read N- to C-terminus: MAGUK p55 subfamily member 2 (552 aa).

2 L27 domains span residues 8–59 and 60–118; these read SESA…EETK and LEAV…YETP. The residue at position 42 (Ser42) is a Phosphoserine. Thr117 carries the phosphothreonine modification. Position 121 is a phosphoserine (Ser121). A PDZ domain is found at 140–219; sequence MVGIRKTAGE…SVILKILPSY (80 aa). Residues 225–293 enclose the SH3 domain; it reads PRQVFVKCHF…PSQLLEEKRK (69 aa). The region spanning 350–537 is the Guanylate kinase-like domain; sequence RKTLVLIGAQ…TFRELQTAME (188 aa).

Belongs to the MAGUK family. In terms of assembly, can homomultimerise. Interacts with CACNG2. Interacts (via the SH3-Guanylate kinase-like sub-module) with DLG4/PSD95 and DLGAP1/GKAP. Interacts (via the PDZ domain) with CADM1 (via C-terminus). Interacts with KCNN2/SK2 (via N-terminal domain). Interacts with SRC. Phosphorylated by SRC. Expressed in pyramidal neurons of CA1 region of the hippocampus.

The protein localises to the cell projection. It is found in the dendrite. It localises to the postsynaptic density. Its subcellular location is the cytoplasm. The protein resides in the cytoskeleton. The protein localises to the membrane. Its function is as follows. Postsynaptic MAGUK scaffold protein that links CADM1 cell adhesion molecules to core components of the postsynaptic density. In CA1 pyramidal neurons, required for synaptic KCNN2-containing channel function and long-term potentiation expression. Seems to negatively regulate SRC function in epithelial cells. The polypeptide is MAGUK p55 subfamily member 2 (Mus musculus (Mouse)).